The primary structure comprises 149 residues: Transcriptional regulator MraZ (149 aa).

SpoVT-AbrB domains follow at residues lysine 7–histidine 54 and alanine 83–asparagine 126.

This sequence belongs to the MraZ family. In terms of assembly, forms oligomers.

The protein localises to the cytoplasm. It localises to the nucleoid. The protein is Transcriptional regulator MraZ of Rickettsia peacockii (strain Rustic).